The primary structure comprises 339 residues: Trace amine-associated receptor 2 (339 aa).

The Extracellular segment spans residues 1–36 (MASFEAQQETFDCSEYGNGSCPENERSLGVRAAMYS). An N-linked (GlcNAc...) asparagine glycan is attached at Asn18. 2 disulfide bridges follow: Cys21–Cys185 and Cys104–Cys189. Residues 37–57 (LMACAIFITIFGNLAMIISIS) form a helical membrane-spanning segment. The Cytoplasmic segment spans residues 58–67 (YFKQLHTPTN). Residues 68 to 88 (LLILSMAVTDFLLGFTIMPYS) form a helical membrane-spanning segment. Topologically, residues 89–106 (MVRSVENCWYFGLTFCKI) are extracellular. A helical membrane pass occupies residues 107-127 (HYSFDLMLSITSIFHLCSVAV). At 128-150 (DRFYAICHPLHYCTKMTIPVVRR) the chain is on the cytoplasmic side. A helical transmembrane segment spans residues 151–171 (LLLVCWSVPGAFAFGVVFSEA). Residues 172 to 195 (YADGIEGYDILVACSSSCPVMFNK) lie on the Extracellular side of the membrane. The helical transmembrane segment at 196–216 (LWGTTLFVAGFFTPSSMMVGI) threads the bilayer. Over 217–251 (YGKIFAVSKKHARVIDNLPENQNNQMRKDKKAAKT) the chain is Cytoplasmic. The helical transmembrane segment at 252–272 (LGIVMGVFLLCWFPCFFTILL) threads the bilayer. Residues 273-287 (DPFLNFSTPAVLFDA) are Extracellular-facing. Residue Asn277 is glycosylated (N-linked (GlcNAc...) asparagine). The helical transmembrane segment at 288 to 310 (LTWFGYFNSTCNPLIYGFFYPWF) threads the bilayer. Residues 311-339 (RRALKYILLGKIFSSHFHNTNLFTQKETE) lie on the Cytoplasmic side of the membrane.

The protein belongs to the G-protein coupled receptor 1 family. Mainly expressed in neurons of the olfactory epithelium. Also present in the limbic brain areas receiving projection from the olfactory system and several brain regions, including the hippocampus, cerebellum, cortex, raphe nuclei, hypothalamus and habenula.

It is found in the cell membrane. Orphan olfactory receptor specific for trace amines. Trace amine compounds are enriched in animal body fluids and act on trace amine-associated receptors (TAARs) to elicit both intraspecific and interspecific innate behaviors. Ligand-binding causes a conformation change that triggers signaling via the G(s)-class of G-proteins which activate adenylate cyclase. May also be required to provide olfactory input into limbic brain areas to regulate emotional behaviors likely via modulation of the dopamine system. The chain is Trace amine-associated receptor 2 from Mus musculus (Mouse).